We begin with the raw amino-acid sequence, 197 residues long: Putative peptidyl-prolyl cis-trans isomerase (197 aa).

Residues 14 to 195 enclose the PPIase cyclophilin-type domain; the sequence is NEIKLIMHTN…HDITIDSIEI (182 aa).

The protein belongs to the cyclophilin-type PPIase family.

It carries out the reaction [protein]-peptidylproline (omega=180) = [protein]-peptidylproline (omega=0). PPIases accelerate the folding of proteins. It catalyzes the cis-trans isomerization of proline imidic peptide bonds in oligopeptides. This chain is Putative peptidyl-prolyl cis-trans isomerase, found in Staphylococcus saprophyticus subsp. saprophyticus (strain ATCC 15305 / DSM 20229 / NCIMB 8711 / NCTC 7292 / S-41).